Reading from the N-terminus, the 698-residue chain is Cytoplasmic polyadenylation element-binding protein 3 (698 aa).

The segment covering 1 to 11 (MQDDLLMDKSK) has biased composition (basic and acidic residues). Disordered stretches follow at residues 1 to 114 (MQDD…WSTG) and 158 to 208 (AQTQ…SAAA). Over residues 13–28 (QPQPQQQQRQQQQPQP) the composition is skewed to low complexity. Positions 29–44 (ESSVSEAPSTPLSSET) are enriched in polar residues. Residues 87–96 (PQQPPPPQEP) show a composition bias toward pro residues. A compositionally biased stretch (polar residues) spans 103–114 (LSPSFGSTWSTG). Over residues 165 to 185 (QPPPPAPAPQPAQPAQPPQAQ) the composition is skewed to pro residues. Residues 186–208 (PPQQRRSPASPSQAPYAQRSAAA) are compositionally biased toward low complexity. S192, S195, and S290 each carry phosphoserine. R308 is subject to Asymmetric dimethylarginine. 2 consecutive RRM domains span residues 441–532 (RKVF…PWNL) and 549–631 (KTIF…PYVL).

This sequence belongs to the RRM CPEB family. Following synaptic activity, forms amyloid-like oligomers. Aggregation requires an intact actin cytoskeleton. Interacts with STAT5B; this inhibits STAT5B-mediated transcriptional activation. Interacts with E3 ubiquitin-protein ligase NEURL1; this leads to monoubiquitination and activation of CPEB3. Interacts with CAPN2; this leads to cleavage of CPEB3. Interacts (via C-terminal RNA-binding region) with TOB1; TOB1 also binds CNOT7/CAF1 and recruits it to CPEB3 to form a ternary complex. Interacts with SUMO-conjugating enzyme UBC9. Interacts with IPO5; the interaction is enhanced in a RAN-regulated manner following neuronal stimulation and mediates CPEB3 nuclear import. Interacts with exportin XPO1/CRM1. In terms of processing, activated by NEURL1-mediated monoubiquitination, resulting in the growth of new dendritic spines and increased levels of GRIA1 and GRIA2. NEURL1-mediated monoubiquitination facilitates synaptic plasticity and hippocampal-dependent memory storage. Post-translationally, under basal unstimulated conditions when CPEB3 is mainly unaggregated, sumoylated and acts as a translational repressor. Following neuronal stimulation, becomes desumoylated and aggregated which is required for the translation of mRNA targets and for dendritic filopodia formation. Following neuronal stimulation, cleaved by CAPN2 which abolishes its translational repressor activity, leading to translation of CPEB3 target mRNAs. In terms of processing, phosphorylation is enhanced by neuronal stimulation.

The protein resides in the cytoplasm. Its subcellular location is the nucleus. It localises to the synapse. The protein localises to the cell projection. It is found in the dendrite. The protein resides in the postsynaptic density. Functionally, sequence-specific RNA-binding protein which acts as a translational repressor in the basal unstimulated state but, following neuronal stimulation, acts as a translational activator. In contrast to CPEB1, does not bind to the cytoplasmic polyadenylation element (CPE), a uridine-rich sequence element within the mRNA 3'-UTR, but binds to a U-rich loop within a stem-loop structure. Required for the consolidation and maintenance of hippocampal-based long term memory. In the basal state, binds to the mRNA 3'-UTR of the glutamate receptors GRIA2/GLUR2 mRNA and negatively regulates their translation. Also represses the translation of DLG4, GRIN1, GRIN2A and GRIN2B. When activated, acts as a translational activator of GRIA1 and GRIA2. In the basal state, suppresses SUMO2 translation but activates it following neuronal stimulation. Binds to the 3'-UTR of TRPV1 mRNA and represses TRPV1 translation which is required to maintain normal thermoception. Binds actin mRNA, leading to actin translational repression in the basal state and to translational activation following neuronal stimulation. Negatively regulates target mRNA levels by binding to TOB1 which recruits CNOT7/CAF1 to a ternary complex and this leads to target mRNA deadenylation and decay. In addition to its role in translation, binds to and inhibits the transcriptional activation activity of STAT5B without affecting its dimerization or DNA-binding activity. This, in turn, represses transcription of the STAT5B target gene EGFR which has been shown to play a role in enhancing learning and memory performance. In contrast to CPEB1, CPEB2 and CPEB4, not required for cell cycle progression. In Homo sapiens (Human), this protein is Cytoplasmic polyadenylation element-binding protein 3 (CPEB3).